The sequence spans 126 residues: MIEQLKQAKNWEDRYRLIIQAGKNLPRPSDNELAQMQPITGCEAQMWFQIMPKNDRTFQFSGFSEARIMNGLLWILFNQINGKTADELNTFDITVFFSELGISQRLSEMRLNGLNQIGQQLKNLCI.

This sequence belongs to the SufE family.

This is an uncharacterized protein from Haemophilus influenzae (strain ATCC 51907 / DSM 11121 / KW20 / Rd).